We begin with the raw amino-acid sequence, 979 residues long: Collagen alpha-2(I) chain (979 aa).

The tract at residues 1–979 is disordered; sequence SGGFDFSFLP…FGYEGDFYRA (979 aa). 4-hydroxyproline occurs at positions 10, 13, 38, and 44. A compositionally biased stretch (low complexity) spans 24–70; the sequence is LGPGPMGLMGPRGPPGASGAPGPQGFQGPAGEPGEPGQTGPAGARGP. K99 is modified (5-hydroxylysine; alternate). An O-linked (Gal...) hydroxylysine; alternate glycan is attached at K99. Low complexity-rich tracts occupy residues 147–176, 222–263, 272–282, and 312–331; these read VGAP…SAGP, PGAN…AGSK, SAGPQGPPGSS, and RAGV…AGVR. 4-hydroxyproline occurs at positions 334 and 337. Residues 363-382 are compositionally biased toward low complexity; sequence LPGIDGRPGPIGPAGARGEA. The segment covering 427 to 436 has biased composition (gly residues); that stretch reads GVQGGKGEQG. The span at 483–500 shows a compositional bias: low complexity; it reads PGESGAVGPSGAIGSRGP. Positions 517 to 527 are enriched in gly residues; it reads GAPGGSGGLPG. Composition is skewed to low complexity over residues 550 to 594 and 601 to 621; these read VGTT…PRGS and VGPA…QPGA. The segment covering 622 to 631 has biased composition (basic and acidic residues); the sequence is KGERGTKGPK. The segment covering 639–649 has biased composition (low complexity); it reads PTGPVGSAGPA. Positions 659–668 are enriched in gly residues; sequence GSRGDGGPPG. Residues 669-679 show a composition bias toward low complexity; sequence ATGFPGAAGRT. Residues 710-724 are compositionally biased toward gly residues; sequence GPVGRGETGAGGPPG. 2 stretches are compositionally biased toward low complexity: residues 725-759 and 767-777; these read FTGE…LGLP and LPGVAGAVGEP. Residues 778 to 788 are compositionally biased toward gly residues; that stretch reads GPLGIGPPGAR. Positions 840–855 are enriched in low complexity; the sequence is EPGPVGSVGPVGALGP. Positions 865-876 are enriched in basic and acidic residues; the sequence is RGDKGEPGDKGP. A compositionally biased stretch (pro residues) spans 949-961; sequence SGPPGPPGPPGPP.

It belongs to the fibrillar collagen family. Trimers of one alpha 2(I) and two alpha 1(I) chains. Interacts (via C-terminus) with TMEM131 (via PapD-L domain); the interaction is direct and is involved in assembly and TRAPPIII ER-to-Golgi transport complex-dependent secretion of collagen. Post-translationally, prolines at the third position of the tripeptide repeating unit (G-X-Y) are hydroxylated in some or all of the chains. As to expression, expressed in bones.

The protein localises to the secreted. It is found in the extracellular space. The protein resides in the extracellular matrix. In terms of biological role, type I collagen is a member of group I collagen (fibrillar forming collagen). This Bradypus variegatus (Brown-throated three-fingered sloth) protein is Collagen alpha-2(I) chain.